Consider the following 319-residue polypeptide: Putrescine hydroxycinnamoyltransferase 2 (319 aa).

Residues His-160 and Asp-301 each act as proton acceptor in the active site.

The protein belongs to the plant acyltransferase family.

In terms of biological role, hydroxycinnamoyl transferase that catalyzes the transfer of an acyl from p-coumaryol-CoA to putrescine, to produce coumaroyl putrescine. This is Putrescine hydroxycinnamoyltransferase 2 from Oryza sativa subsp. japonica (Rice).